A 367-amino-acid chain; its full sequence is Queuine tRNA-ribosyltransferase (367 aa).

D92 acts as the Proton acceptor in catalysis. Substrate contacts are provided by residues 92–96 (DSGGF), D146, Q188, and G215. Positions 246–252 (GVGTPKD) are RNA binding. D265 acts as the Nucleophile in catalysis. Positions 303, 305, 308, and 334 each coordinate Zn(2+).

Belongs to the queuine tRNA-ribosyltransferase family. In terms of assembly, homodimer. Within each dimer, one monomer is responsible for RNA recognition and catalysis, while the other monomer binds to the replacement base PreQ1. Requires Zn(2+) as cofactor.

The enzyme catalyses 7-aminomethyl-7-carbaguanine + guanosine(34) in tRNA = 7-aminomethyl-7-carbaguanosine(34) in tRNA + guanine. Its pathway is tRNA modification; tRNA-queuosine biosynthesis. Its function is as follows. Catalyzes the base-exchange of a guanine (G) residue with the queuine precursor 7-aminomethyl-7-deazaguanine (PreQ1) at position 34 (anticodon wobble position) in tRNAs with GU(N) anticodons (tRNA-Asp, -Asn, -His and -Tyr). Catalysis occurs through a double-displacement mechanism. The nucleophile active site attacks the C1' of nucleotide 34 to detach the guanine base from the RNA, forming a covalent enzyme-RNA intermediate. The proton acceptor active site deprotonates the incoming PreQ1, allowing a nucleophilic attack on the C1' of the ribose to form the product. After dissociation, two additional enzymatic reactions on the tRNA convert PreQ1 to queuine (Q), resulting in the hypermodified nucleoside queuosine (7-(((4,5-cis-dihydroxy-2-cyclopenten-1-yl)amino)methyl)-7-deazaguanosine). This is Queuine tRNA-ribosyltransferase from Francisella tularensis subsp. novicida (strain U112).